The following is a 609-amino-acid chain: Zinc metalloproteinase-disintegrin-like VMP-III (609 aa).

The signal sequence occupies residues 1-20 (MIQVLLVTICLAAFPYQGSS). Positions 21–189 (IILESGNVND…KKASQLVVTA (169 aa)) are excised as a propeptide. One can recognise a Peptidase M12B domain in the interval 198-393 (RFVELFLVVD…HNPECILNEP (196 aa)). 2 residues coordinate Ca(2+): E201 and D285. 3 disulfides stabilise this stretch: C308-C388, C348-C372, and C350-C355. H333 is a binding site for Zn(2+). Residue E334 is part of the active site. Zn(2+) contacts are provided by H337 and H343. The N-linked (GlcNAc...) asparagine glycan is linked to N371. The Ca(2+) site is built by C388, N391, V403, N406, L408, E410, E413, and D416. The 87-residue stretch at 401-487 (PPVCGNELLE…ECPADVFHKN (87 aa)) folds into the Disintegrin domain. 14 cysteine pairs are disulfide-bonded: C404–C433, C415–C428, C417–C423, C427–C450, C441–C447, C446–C472, C459–C479, C466–C498, C491–C503, C510–C560, C525–C571, C538–C548, C555–C597, and C591–C602. The D/ECD-tripeptide signature appears at 465-467 (ECD). Positions 467, 468, 470, 482, and 483 each coordinate Ca(2+).

It belongs to the venom metalloproteinase (M12B) family. P-III subfamily. P-IIIa sub-subfamily. As to quaternary structure, monomer. Requires Zn(2+) as cofactor. In terms of tissue distribution, expressed by the venom gland.

Its subcellular location is the secreted. In terms of biological role, snake venom metalloproteinase that impairs hemostasis in the envenomed animal. The sequence is that of Zinc metalloproteinase-disintegrin-like VMP-III from Crotalus viridis viridis (Prairie rattlesnake).